The chain runs to 118 residues: UPF0342 protein BCE_0953 (118 aa).

This sequence belongs to the UPF0342 family.

This chain is UPF0342 protein BCE_0953, found in Bacillus cereus (strain ATCC 10987 / NRS 248).